The following is a 1164-amino-acid chain: MAQQANVGELLAMLDSPMLGVRDDVTAVFKENLNSDRGPMLVNTLVDYYLETSSQPALHILTTLQEPHDKHLLDRINEYVGKAATRLSILSLLGHVIRLQPSWKHKLSQAPLLPSLLKCLKMDTDVVVLTTGVLVLITMLPMIPQSGKQHLLDFFDIFGRLSSWCLKKPGHVAEVYLVHLHASVYALFHRLYGMYPCNFVSFLRSHYSMKENLETFEEVVKPMMEHVRIHPELVTGSKDHELDPRRWKRLETHDVVIECAKISLDPTEASYEDGYSVSHQISARFPHRSADVTTSPYADTQNSYGCATSTPYSTSRLMLLNMPGQLPQTLSSPSTRLITEPPQATLWSPSMVCGMTTPPTSPGNVPPDLSHPYSKVFGTTAGGKGTPLGTPATSPPPAPLCHSDDYVHISLPQATVTPPRKEERMDSARPCLHRQHHLLNDRGSEEPPGSKGSVTLSDLPGFLGDLASEEDSIEKDKEEAAISRELSEITTAEAEPVVPRGGFDSPFYRDSLPGSQRKTHSAASSSQGASVNPEPLHSSLDKLGPDTPKQAFTPIDLPCGSADESPAGDRECQTSLETSIFTPSPCKIPPPTRVGFGSGQPPPYDHLFEVALPKTAHHFVIRKTEELLKKAKGNTEEDGVPSTSPMEVLDRLIQQGADAHSKELNKLPLPSKSVDWTHFGGSPPSDEIRTLRDQLLLLHNQLLYERFKRQQHALRNRRLLRKVIKAAALEEHNAAMKDQLKLQEKDIQMWKVSLQKEQARYNQLQEQRDTMVTKLHSQIRQLQHDREEFYNQSQELQTKLEDCRNMIAELRIELKKANNKVCHTELLLSQVSQKLSNSESVQQQMEFLNRQLLVLGEVNELYLEQLQNKHSDTTKEVEMMKAAYRKELEKNRSHVLQQTQRLDTSQKRILELESHLAKKDHLLLEQKKYLEDVKLQARGQLQAAESRYEAQKRITQVFELEILDLYGRLEKDGLLKKLEEEKAEAAEAAEERLDCCNDGCSDSMVGHNEEASGHNGETKTPRPSSARGSSGSRGGGGSSSSSSELSTPEKPPHQRAGPFSSRWETTMGEASASIPTTVGSLPSSKSFLGMKARELFRNKSESQCDEDGMTSSLSESLKTELGKDLGVEAKIPLNLDGPHPSPPTPDSVGQLHIMDYNETHHEHS.

A Glycyl lysine isopeptide (Lys-Gly) (interchain with G-Cter in ubiquitin) cross-link involves residue Lys30. Residues 403–787 are mediates interaction with WDR45B; sequence SDDYVHISLP…QIRQLQHDRE (385 aa). Residues 439–571 are disordered; that stretch reads LNDRGSEEPP…ADESPAGDRE (133 aa). Positions 474-487 are enriched in basic and acidic residues; sequence EKDKEEAAISRELS. A phosphoserine mark is found at Ser487, Ser505, Ser511, Ser521, and Ser598. The segment covering 513-530 has biased composition (polar residues); sequence PGSQRKTHSAASSSQGAS. The stretch at 721-997 forms a coiled coil; that stretch reads RKVIKAAALE…AAEERLDCCN (277 aa). Residues 1006-1085 form a disordered region; it reads GHNEEASGHN…TTVGSLPSSK (80 aa). Residues 1007 to 1020 are compositionally biased toward basic and acidic residues; that stretch reads HNEEASGHNGETKT. Residues 1073-1085 show a composition bias toward polar residues; it reads SIPTTVGSLPSSK. A Phosphoserine modification is found at Ser1100. The interval 1131–1164 is disordered; sequence IPLNLDGPHPSPPTPDSVGQLHIMDYNETHHEHS. Residues 1155–1164 are compositionally biased toward basic and acidic residues; the sequence is DYNETHHEHS.

As to quaternary structure, component of the TSC-TBC complex (also named Rhebulator complex), composed of 2 molecules of TSC1, 2 molecules of TSC2 and 1 molecule of TBC1D7. Probably forms a complex composed of chaperones HSP90 and HSP70, co-chaperones STIP1/HOP, CDC37, PPP5C, PTGES3/p23, TSC1 and client protein TSC2. Forms a complex composed of chaperones HSP90 and HSP70, co-chaperones CDC37, PPP5C, TSC1 and client protein TSC2, CDK4, AKT, RAF1 and NR3C1; this complex does not contain co-chaperones STIP1/HOP and PTGES3/p23. Forms a complex containing HSP90AA1, TSC1 and TSC2; TSC1 is required to recruit TCS2 to the complex. Interacts (via C-terminus) with the closed form of HSP90AA1 (via the middle domain and TPR repeat-binding motif). Interacts with DOCK7. Interacts with FBXW5. Interacts with WDR45B. Interacts with RPAP3 and URI1. Post-translationally, phosphorylation at Ser-505 does not affect interaction with TSC2. In terms of processing, 'Lys-63'-linked ubiquitinated at Lys-30 by PELI1; the ubiquitination promotes TSC1/TSC2 complex stability. Highly expressed in skeletal muscle, followed by heart, brain, placenta, pancreas, lung, liver and kidney. Also expressed in embryonic kidney cells.

The protein localises to the lysosome membrane. The protein resides in the cytoplasm. Its subcellular location is the cytosol. Non-catalytic component of the TSC-TBC complex, a multiprotein complex that acts as a negative regulator of the canonical mTORC1 complex, an evolutionarily conserved central nutrient sensor that stimulates anabolic reactions and macromolecule biosynthesis to promote cellular biomass generation and growth. The TSC-TBC complex acts as a GTPase-activating protein (GAP) for the small GTPase RHEB, a direct activator of the protein kinase activity of mTORC1. In absence of nutrients, the TSC-TBC complex inhibits mTORC1, thereby preventing phosphorylation of ribosomal protein S6 kinase (RPS6KB1 and RPS6KB2) and EIF4EBP1 (4E-BP1) by the mTORC1 signaling. The TSC-TBC complex is inactivated in response to nutrients, relieving inhibition of mTORC1. Within the TSC-TBC complex, TSC1 stabilizes TSC2 and prevents TSC2 self-aggregation. Acts as a tumor suppressor. Involved in microtubule-mediated protein transport via its ability to regulate mTORC1 signaling. Also acts as a co-chaperone for HSP90AA1 facilitating HSP90AA1 chaperoning of protein clients such as kinases, TSC2 and glucocorticoid receptor NR3C1. Increases ATP binding to HSP90AA1 and inhibits HSP90AA1 ATPase activity. Competes with the activating co-chaperone AHSA1 for binding to HSP90AA1, thereby providing a reciprocal regulatory mechanism for chaperoning of client proteins. Recruits TSC2 to HSP90AA1 and stabilizes TSC2 by preventing the interaction between TSC2 and ubiquitin ligase HERC1. This is Hamartin from Homo sapiens (Human).